Consider the following 317-residue polypeptide: MATH domain and coiled-coil domain-containing protein At3g58240 (317 aa).

The MATH domain maps to 6–131 (DNKFTWVIKN…DGEVEIVAQI (126 aa)). The stretch at 254–305 (KLDWLEKKLDEVKEIKKKCERVTEMEKELHDLMNKHTNVSKLLEKEKLEIKN) forms a coiled coil.

This is MATH domain and coiled-coil domain-containing protein At3g58240 from Arabidopsis thaliana (Mouse-ear cress).